Here is a 135-residue protein sequence, read N- to C-terminus: ATP synthase epsilon chain (135 aa).

Belongs to the ATPase epsilon chain family. As to quaternary structure, F-type ATPases have 2 components, CF(1) - the catalytic core - and CF(0) - the membrane proton channel. CF(1) has five subunits: alpha(3), beta(3), gamma(1), delta(1), epsilon(1). CF(0) has three main subunits: a, b and c.

It localises to the cell inner membrane. Its function is as follows. Produces ATP from ADP in the presence of a proton gradient across the membrane. The sequence is that of ATP synthase epsilon chain from Nitrobacter winogradskyi (strain ATCC 25391 / DSM 10237 / CIP 104748 / NCIMB 11846 / Nb-255).